The following is a 364-amino-acid chain: Aminomethyltransferase (364 aa).

Belongs to the GcvT family. In terms of assembly, the glycine cleavage system is composed of four proteins: P, T, L and H.

The enzyme catalyses N(6)-[(R)-S(8)-aminomethyldihydrolipoyl]-L-lysyl-[protein] + (6S)-5,6,7,8-tetrahydrofolate = N(6)-[(R)-dihydrolipoyl]-L-lysyl-[protein] + (6R)-5,10-methylene-5,6,7,8-tetrahydrofolate + NH4(+). The glycine cleavage system catalyzes the degradation of glycine. The protein is Aminomethyltransferase of Salmonella paratyphi C (strain RKS4594).